The primary structure comprises 576 residues: Glucose-6-phosphate 1-dehydrogenase 1, chloroplastic (576 aa).

The N-terminal 50 residues, 1 to 50 (MATHSMIIPSPSSSSSSLATAASPFKETLPLFSRSLTFPRKSLFSQVRLR), are a transit peptide targeting the chloroplast. NADP(+) contacts are provided by residues 97–104 (GASGDLAK) and R131. C149 and C157 are disulfide-bonded. K234 contributes to the NADP(+) binding site. D-glucose 6-phosphate is bound by residues K234, 264-268 (HYLGK), E302, and D321. H326 (proton acceptor) is an active-site residue. K419 contributes to the NADP(+) binding site. D-glucose 6-phosphate contacts are provided by K422 and R427. Residues R432 and R461 each coordinate NADP(+). D-glucose 6-phosphate is bound at residue Q463. NADP(+) contacts are provided by residues 469–471 (YLR) and R554.

Belongs to the glucose-6-phosphate dehydrogenase family. Forms homodimer. Interacts with G6PD2, G6PD3 and G6PD4. Expressed in leaves, stems, buds, flowers and siliques.

The protein resides in the plastid. Its subcellular location is the chloroplast stroma. The protein localises to the peroxisome. It catalyses the reaction D-glucose 6-phosphate + NADP(+) = 6-phospho-D-glucono-1,5-lactone + NADPH + H(+). It functions in the pathway carbohydrate degradation; pentose phosphate pathway; D-ribulose 5-phosphate from D-glucose 6-phosphate (oxidative stage): step 1/3. With respect to regulation, regulated by metabolites. Post-translationally inactivated by cysteine-mediated redox modification via the ferredoxin-thioredoxin system in the light and this avoids futile cycles with photosynthetic CO2 fixation. In terms of biological role, catalyzes the rate-limiting step of the oxidative pentose-phosphate pathway, which represents a route for the dissimilation of carbohydrates besides glycolysis. The main function of this enzyme is to provide reducing power (NADPH) and pentose phosphates for fatty acid and nucleic acid synthesis which are involved in membrane synthesis and cell division. The sequence is that of Glucose-6-phosphate 1-dehydrogenase 1, chloroplastic from Arabidopsis thaliana (Mouse-ear cress).